Reading from the N-terminus, the 121-residue chain is Flagellar hook-basal body complex protein FliE (121 aa).

It belongs to the FliE family.

It is found in the bacterial flagellum basal body. This Treponema denticola (strain ATCC 35405 / DSM 14222 / CIP 103919 / JCM 8153 / KCTC 15104) protein is Flagellar hook-basal body complex protein FliE.